We begin with the raw amino-acid sequence, 865 residues long: Protein translocase subunit SecA (865 aa).

Residues Gln93, 111 to 115 (GEGKT), and Asp501 each bind ATP. Zn(2+) is bound by residues Cys841, Cys843, Cys852, and Cys853.

The protein belongs to the SecA family. In terms of assembly, monomer and homodimer. Part of the essential Sec protein translocation apparatus which comprises SecA, SecYEG and auxiliary proteins SecDF-YajC and YidC. Zn(2+) is required as a cofactor.

The protein resides in the cell inner membrane. It is found in the cytoplasm. It carries out the reaction ATP + H2O + cellular proteinSide 1 = ADP + phosphate + cellular proteinSide 2.. Functionally, part of the Sec protein translocase complex. Interacts with the SecYEG preprotein conducting channel. Has a central role in coupling the hydrolysis of ATP to the transfer of proteins into and across the cell membrane, serving as an ATP-driven molecular motor driving the stepwise translocation of polypeptide chains across the membrane. The chain is Protein translocase subunit SecA from Helicobacter acinonychis (strain Sheeba).